The primary structure comprises 377 residues: Gap junction gamma-1 protein (377 aa).

The Cytoplasmic portion of the chain corresponds to 1–18 (MSWSFLTRLLEEINNHST). The chain crosses the membrane as a helical span at residues 19 to 39 (FVGKIWLTVLIIFRIVLTAVG). The Extracellular segment spans residues 40–75 (GESIYYDEQSKFTCNTHQPGCENVCYDAFAPLSHVR). Residues 76-96 (FWVFQIILITTPSIMYLGFAM) form a helical membrane-spanning segment. The Cytoplasmic segment spans residues 97–174 (HRIARQPDEQ…RRIKQDGLMK (78 aa)). The disordered stretch occupies residues 129-163 (DYEEAEDNQEEDPMICEEEEPEKDSEKGDKKKHDG). Positions 131–151 (EEAEDNQEEDPMICEEEEPEK) are enriched in acidic residues. The helical transmembrane segment at 175 to 197 (VYVLQLLFRSVFEVGFLMGQYVL) threads the bilayer. Over 198–228 (YGFEVIPFFVCSRNPCPHTVDCFVSRPTEKT) the chain is Extracellular. Residues 229 to 249 (IFLLIMYAVSALCLFLNLCEL) traverse the membrane as a helical segment. At 250-377 (FHLGIGGIRD…GVGSREKSGL (128 aa)) the chain is on the cytoplasmic side. 2 disordered regions span residues 266 to 286 (KEIQ…HSVL) and 341 to 377 (AHAS…KSGL). Residues 344-362 (SRSSSPEANSIAAEQNRLN) are compositionally biased toward polar residues.

This sequence belongs to the connexin family. Gamma-type subfamily. In terms of assembly, a connexon is composed of a hexamer of connexins.

Its subcellular location is the cell membrane. It is found in the cell junction. It localises to the gap junction. One gap junction consists of a cluster of closely packed pairs of transmembrane channels, the connexons, through which materials of low MW diffuse from one cell to a neighboring cell. This chain is Gap junction gamma-1 protein (gjc1), found in Xenopus laevis (African clawed frog).